We begin with the raw amino-acid sequence, 858 residues long: Magnesium transporter ALR2 (858 aa).

Residues 1–14 are compositionally biased toward low complexity; it reads MSSLSTSFDSSSDL. 3 disordered regions span residues 1 to 81, 318 to 337, and 365 to 396; these read MSSL…NGGY, TYNH…TSGS, and NNES…EGND. Residues 1-741 are Cytoplasmic-facing; it reads MSSLSTSFDS…NNKVTEMLGK (741 aa). Residues 46–61 are compositionally biased toward basic and acidic residues; sequence PIRHEALALKVDETKD. A compositionally biased stretch (low complexity) spans 67–81; the sequence is SSSNGENSGVENGGY. 2 stretches are compositionally biased toward basic and acidic residues: residues 367-379 and 386-395; these read ESVR…DLHP and NKIEGEKEGN. A helical membrane pass occupies residues 742 to 762; it reads VTMLGTMLVPLNVITGLFGMN. The Extracellular portion of the chain corresponds to 763 to 771; that stretch reads VKVPGRNGS. A helical transmembrane segment spans residues 772 to 792; that stretch reads IAWWYGILGVLLLLAVISWFL. At 793 to 858 the chain is on the cytoplasmic side; sequence ASYWIKKIDP…SLPSRYSRYN (66 aa).

Belongs to the CorA metal ion transporter (MIT) (TC 1.A.35) family.

The protein resides in the cell membrane. Its function is as follows. Plasma membrane magnesium transporter. The protein is Magnesium transporter ALR2 (ALR2) of Saccharomyces cerevisiae (strain ATCC 204508 / S288c) (Baker's yeast).